Here is a 325-residue protein sequence, read N- to C-terminus: Succinylglutamate desuccinylase (325 aa).

3 residues coordinate Zn(2+): H51, E54, and H148. Residue E211 is part of the active site.

The protein belongs to the AspA/AstE family. Succinylglutamate desuccinylase subfamily. Zn(2+) is required as a cofactor.

It catalyses the reaction N-succinyl-L-glutamate + H2O = L-glutamate + succinate. Its pathway is amino-acid degradation; L-arginine degradation via AST pathway; L-glutamate and succinate from L-arginine: step 5/5. Its function is as follows. Transforms N(2)-succinylglutamate into succinate and glutamate. In Photorhabdus laumondii subsp. laumondii (strain DSM 15139 / CIP 105565 / TT01) (Photorhabdus luminescens subsp. laumondii), this protein is Succinylglutamate desuccinylase.